We begin with the raw amino-acid sequence, 282 residues long: Endo-1,4-beta-xylanase B (282 aa).

Positions 1-39 are cleaved as a signal peptide; sequence MGISSILLSALIAGGALALPAAEPVSFDIRDENITLARR. A glycan (N-linked (GlcNAc...) asparagine) is linked at N33. The GH11 domain maps to 40–219; sequence AEAINYNQDY…GSGSGQISLS (180 aa). Catalysis depends on E117, which acts as the Nucleophile. E206 (proton donor) is an active-site residue. The segment at 214–245 is disordered; that stretch reads GQISLSKGTGGGSTTTTPTGPTSTSTAPSSGG. Over residues 227–243 the composition is skewed to low complexity; sequence TTTTPTGPTSTSTAPSS. The 37-residue stretch at 246 to 282 folds into the CBM1 domain; the sequence is TGAAQWGQCGGIGWTGPTTCVAPYTCKYENAYYSQCQ.

Belongs to the glycosyl hydrolase 11 (cellulase G) family.

The protein resides in the secreted. It catalyses the reaction Endohydrolysis of (1-&gt;4)-beta-D-xylosidic linkages in xylans.. It participates in glycan degradation; xylan degradation. Significantly inhibited by the wheat xylanase inhibiting protein I (XIP-I) and the proteinaceous endoxylanase Triticum aestivum xylanase inhibitors I (TAXI-I), but not TAXI-II. Functionally, endo-1,4-beta-xylanase involved in the hydrolysis of xylan, a major structural heterogeneous polysaccharide found in plant biomass representing the second most abundant polysaccharide in the biosphere, after cellulose. In Talaromyces funiculosus (Fruitlet core rot fungus), this protein is Endo-1,4-beta-xylanase B (xynB).